The sequence spans 202 residues: Large ribosomal subunit protein eL13 (202 aa).

A disordered region spans residues 183 to 202 (GIREKRAKEKAEAEAEKAKK).

Belongs to the eukaryotic ribosomal protein eL13 family. Component of the large ribosomal subunit. Mature ribosomes consist of a small (40S) and a large (60S) subunit. The 40S subunit contains about 32 different proteins and 1 molecule of RNA (18S). The 60S subunit contains 45 different proteins and 3 molecules of RNA (25S, 5.8S and 5S).

The protein resides in the cytoplasm. Its function is as follows. Component of the ribosome, a large ribonucleoprotein complex responsible for the synthesis of proteins in the cell. The small ribosomal subunit (SSU) binds messenger RNAs (mRNAs) and translates the encoded message by selecting cognate aminoacyl-transfer RNA (tRNA) molecules. The large subunit (LSU) contains the ribosomal catalytic site termed the peptidyl transferase center (PTC), which catalyzes the formation of peptide bonds, thereby polymerizing the amino acids delivered by tRNAs into a polypeptide chain. The nascent polypeptides leave the ribosome through a tunnel in the LSU and interact with protein factors that function in enzymatic processing, targeting, and the membrane insertion of nascent chains at the exit of the ribosomal tunnel. In Candida albicans (strain SC5314 / ATCC MYA-2876) (Yeast), this protein is Large ribosomal subunit protein eL13.